The primary structure comprises 175 residues: RNA pyrophosphohydrolase (175 aa).

A Nudix hydrolase domain is found at 8–159 (PYRTCVGMML…KRPVYERVVK (152 aa)). Positions 47-68 (GGVDPGEDPWTAAKRELYEETS) match the Nudix box motif.

Belongs to the Nudix hydrolase family. RppH subfamily. The cofactor is a divalent metal cation.

Its function is as follows. Accelerates the degradation of transcripts by removing pyrophosphate from the 5'-end of triphosphorylated RNA, leading to a more labile monophosphorylated state that can stimulate subsequent ribonuclease cleavage. This Rhodopseudomonas palustris (strain BisB18) protein is RNA pyrophosphohydrolase.